We begin with the raw amino-acid sequence, 86 residues long: Cell division topological specificity factor (86 aa).

It belongs to the MinE family.

Functionally, prevents the cell division inhibition by proteins MinC and MinD at internal division sites while permitting inhibition at polar sites. This ensures cell division at the proper site by restricting the formation of a division septum at the midpoint of the long axis of the cell. This Azoarcus sp. (strain BH72) protein is Cell division topological specificity factor.